The sequence spans 363 residues: tRNA/tmRNA (uracil-C(5))-methyltransferase (363 aa).

Residues Gln187, Tyr215, Asn220, Glu236, and Asp296 each coordinate S-adenosyl-L-methionine. Cys321 (nucleophile) is an active-site residue. The active-site Proton acceptor is Glu355.

This sequence belongs to the class I-like SAM-binding methyltransferase superfamily. RNA M5U methyltransferase family. TrmA subfamily.

The enzyme catalyses uridine(54) in tRNA + S-adenosyl-L-methionine = 5-methyluridine(54) in tRNA + S-adenosyl-L-homocysteine + H(+). It catalyses the reaction uridine(341) in tmRNA + S-adenosyl-L-methionine = 5-methyluridine(341) in tmRNA + S-adenosyl-L-homocysteine + H(+). Functionally, dual-specificity methyltransferase that catalyzes the formation of 5-methyluridine at position 54 (m5U54) in all tRNAs, and that of position 341 (m5U341) in tmRNA (transfer-mRNA). This is tRNA/tmRNA (uracil-C(5))-methyltransferase from Haemophilus influenzae (strain 86-028NP).